The chain runs to 369 residues: Nuclear pore complex-interacting protein family member A2 (369 aa).

Positions 325–346 (KTPPECLLTPLPPSAPPSADDN) are disordered.

This sequence belongs to the NPIP family.

The chain is Nuclear pore complex-interacting protein family member A2 (NPIPA2) from Homo sapiens (Human).